Here is a 221-residue protein sequence, read N- to C-terminus: MRILLIEDDNLIGNGLQIGLTKLGFAVDWFTDGKTGMAALTSAPYDAVVLDLTLPKLDGLEVLQQWRSNHQDVPVLILTARDTLDERVKGLQSGADDYLCKPFALAEVAARLQALIRRRYGYHHSVIEQAGVKLDQNQRSVWLNNQPISLTSREYKLLELFMLNKDRVLSRSSIEEKLSSWDEEISSGALDVHIYNLRQKLGKQFIRTVHGVGYALGQVEK.

One can recognise a Response regulatory domain in the interval 2-116; the sequence is RILLIEDDNL…EVAARLQALI (115 aa). Residue D51 is modified to 4-aspartylphosphate. Positions 124 to 218 form a DNA-binding region, ompR/PhoB-type; it reads HSVIEQAGVK…VHGVGYALGQ (95 aa).

Phosphorylated by QseC.

Its subcellular location is the cytoplasm. In terms of biological role, member of a two-component regulatory system QseB/QseC. This Haemophilus influenzae (strain ATCC 51907 / DSM 11121 / KW20 / Rd) protein is Transcriptional regulatory protein QseB (qseB).